The sequence spans 340 residues: Uroporphyrinogen decarboxylase (340 aa).

Residues 21 to 25, aspartate 71, tyrosine 147, serine 202, and histidine 316 each bind substrate; that span reads RQAGR.

Belongs to the uroporphyrinogen decarboxylase family. In terms of assembly, homodimer.

It is found in the cytoplasm. The enzyme catalyses uroporphyrinogen III + 4 H(+) = coproporphyrinogen III + 4 CO2. The protein operates within porphyrin-containing compound metabolism; protoporphyrin-IX biosynthesis; coproporphyrinogen-III from 5-aminolevulinate: step 4/4. In terms of biological role, catalyzes the decarboxylation of four acetate groups of uroporphyrinogen-III to yield coproporphyrinogen-III. This chain is Uroporphyrinogen decarboxylase, found in Nitratiruptor sp. (strain SB155-2).